A 1004-amino-acid polypeptide reads, in one-letter code: ABC transporter G family member 25 (1004 aa).

Positions M1–C27 are cleaved as a signal peptide. A helical membrane pass occupies residues A271–Y291. Positions S343 to A373 are disordered. A compositionally biased stretch (basic and acidic residues) spans E352–G361. A compositionally biased stretch (basic residues) spans K362 to H372. The region spanning V419–E659 is the ABC transporter domain. Residue G451–T458 participates in ATP binding. The next 6 helical transmembrane spans lie at A776–I796, F804–A824, L886–F906, E907–T927, W943–T963, and F978–L998.

Belongs to the ABC transporter superfamily. ABCG family. Eye pigment precursor importer (TC 3.A.1.204) subfamily.

Its subcellular location is the membrane. The chain is ABC transporter G family member 25 from Oryza sativa subsp. japonica (Rice).